A 165-amino-acid chain; its full sequence is Inorganic pyrophosphatase (165 aa).

The substrate site is built by K21, R35, and Y47. Residues D57, D62, and D94 each coordinate Mg(2+). Y131 serves as a coordination point for substrate.

This sequence belongs to the PPase family. Homotrimer. In presence of divalent cations the trimers aggregate to form a hexamer. Requires Mg(2+) as cofactor.

The protein localises to the cytoplasm. The catalysed reaction is diphosphate + H2O = 2 phosphate + H(+). Catalyzes the hydrolysis of inorganic pyrophosphate (PPi) forming two phosphate ions. The sequence is that of Inorganic pyrophosphatase from Bacillus sp. (strain PS3).